The primary structure comprises 281 residues: Phosphatidylglycerol--prolipoprotein diacylglyceryl transferase (281 aa).

4 consecutive transmembrane segments (helical) span residues 29–49 (FYSL…GKMI), 64–84 (LFFY…VLFY), 100–120 (GGMS…FVSW), and 124–144 (LNWL…MFLG). R145 is a binding site for a 1,2-diacyl-sn-glycero-3-phospho-(1'-sn-glycerol). The next 3 helical transmembrane spans lie at 180–200 (QLYQ…LLFW), 209–229 (GVLV…NEFF), and 248–268 (GQWL…YALT).

Belongs to the Lgt family.

The protein resides in the cell inner membrane. It carries out the reaction L-cysteinyl-[prolipoprotein] + a 1,2-diacyl-sn-glycero-3-phospho-(1'-sn-glycerol) = an S-1,2-diacyl-sn-glyceryl-L-cysteinyl-[prolipoprotein] + sn-glycerol 1-phosphate + H(+). The protein operates within protein modification; lipoprotein biosynthesis (diacylglyceryl transfer). Its function is as follows. Catalyzes the transfer of the diacylglyceryl group from phosphatidylglycerol to the sulfhydryl group of the N-terminal cysteine of a prolipoprotein, the first step in the formation of mature lipoproteins. This Erythrobacter litoralis (strain HTCC2594) protein is Phosphatidylglycerol--prolipoprotein diacylglyceryl transferase.